A 170-amino-acid chain; its full sequence is Fibroblast growth factor 2 (170 aa).

The interval 1–21 (VGGRGRGRGTAAAARREPGGA) is disordered. 3 positions are modified to omega-N-methylarginine; alternate: Arg4, Arg6, and Arg8. Symmetric dimethylarginine; alternate is present on residues Arg4, Arg6, and Arg8. Residues 9-21 (GTAAAARREPGGA) show a composition bias toward low complexity. A heparin-binding site is contributed by Asn51. Position 97 is a phosphotyrosine; by TEC (Tyr97). Lys110 is covalently cross-linked (Glycyl lysine isopeptide (Lys-Gly) (interchain with G-Cter in SUMO1)). The interval 143–159 (KRTGQYKLGSKTGPGQK) is heparin-binding.

This sequence belongs to the heparin-binding growth factors family. As to quaternary structure, monomer. Homodimer. Interacts with FGFR1, FGFR2, FGFR3 and FGFR4. Affinity between fibroblast growth factors (FGFs) and their receptors is increased by heparan sulfate glycosaminoglycans that function as coreceptors. Interacts with CSPG4, FGFBP1 and TEC. Found in a complex with FGFBP1, FGF1 and FGF2. Interacts with FGFBP3. Interacts with integrin ITGAV:ITGB3; the interaction is required for FGF2 signaling. Interacts with SNORC (via the extracellular domain). Interacts with glypican GPC3. The N-terminus of isoform 2 is blocked. Post-translationally, phosphorylation at Tyr-97 regulates FGF2 unconventional secretion.

The protein localises to the secreted. It localises to the nucleus. Its function is as follows. Acts as a ligand for FGFR1, FGFR2, FGFR3 and FGFR4. Also acts as an integrin ligand which is required for FGF2 signaling. Binds to integrin ITGAV:ITGB3. Plays an important role in the regulation of cell survival, cell division, cell differentiation and cell migration. Functions as a potent mitogen in vitro. Can induce angiogenesis. Mediates phosphorylation of ERK1/2 and thereby promotes retinal lens fiber differentiation. The polypeptide is Fibroblast growth factor 2 (FGF2) (Cavia porcellus (Guinea pig)).